The following is a 213-amino-acid chain: Cell wall protein PGA62 (213 aa).

A signal peptide spans 1–18 (MQFSSAVVLSAVAGSALA). A glycan (N-linked (GlcNAc...) asparagine) is linked at asparagine 22. Positions 120–194 (CPLPSTEAPG…APAVSTAEAG (75 aa)) are disordered. Over residues 145 to 172 (PVPTTAAESSPAKTTAAESSPAQETTPK) the composition is skewed to polar residues. Positions 173–194 (TVAAESSSAETTAPAVSTAEAG) are enriched in low complexity. Glycine 194 carries GPI-anchor amidated glycine lipidation. Positions 195 to 213 (AAANAVPVAAGLLALAALF) are cleaved as a propeptide — removed in mature form.

This sequence belongs to the HWP1 family. Post-translationally, N- and O-glycosylated. In terms of processing, the GPI-anchor is attached to the protein in the endoplasmic reticulum and serves to target the protein to the cell surface. There, the glucosamine-inositol phospholipid moiety is cleaved off and the GPI-modified mannoprotein is covalently attached via its lipidless GPI glycan remnant to the 1,6-beta-glucan of the outer cell wall layer.

The protein resides in the secreted. The protein localises to the cell wall. It localises to the membrane. Cell wall protein necessary for cell wall integrity. Plays only a minor role in hyphal morphogenesis and is not critical to biofilm formation. The chain is Cell wall protein PGA62 (PGA62) from Candida albicans (strain SC5314 / ATCC MYA-2876) (Yeast).